The chain runs to 1348 residues: ABC multidrug transporter atrD (1348 aa).

The span at methionine 1–serine 10 shows a compositional bias: polar residues. Residues methionine 1–asparagine 67 form a disordered region. The segment covering glutamate 20–proline 31 has biased composition (low complexity). Asparagine 99 carries an N-linked (GlcNAc...) asparagine glycan. The next 4 membrane-spanning stretches (helical) occupy residues isoleucine 114 to phenylalanine 134, tyrosine 168 to isoleucine 188, lysine 240 to valine 260, and isoleucine 268 to isoleucine 288. The region spanning valine 118–asparagine 408 is the ABC transmembrane type-1 1 domain. Asparagine 314 carries an N-linked (GlcNAc...) asparagine glycan. The next 2 helical transmembrane spans lie at isoleucine 344–glycine 364 and phenylalanine 371–isoleucine 391. One can recognise an ABC transporter 1 domain in the interval isoleucine 443–alanine 688. Residue glycine 478–serine 485 coordinates ATP. Residue asparagine 550 is glycosylated (N-linked (GlcNAc...) asparagine). Transmembrane regions (helical) follow at residues methionine 778–leucine 798 and leucine 825–phenylalanine 845. The ABC transmembrane type-1 2 domain occupies leucine 779–lysine 1068. Asparagine 877 is a glycosylation site (N-linked (GlcNAc...) asparagine). A run of 4 helical transmembrane segments spans residues histidine 892 to glycine 912, leucine 925 to leucine 947, alanine 1015 to histidine 1035, and phenylalanine 1042 to phenylalanine 1062. Asparagine 1088 carries an N-linked (GlcNAc...) asparagine glycan. The ABC transporter 2 domain occupies isoleucine 1103–leucine 1341. Glycine 1138–serine 1145 is a binding site for ATP.

Belongs to the ABC transporter superfamily. ABCB family. Multidrug resistance exporter (TC 3.A.1.201) subfamily.

The protein resides in the cell membrane. With respect to regulation, fenamirol efflux transporter activity is inhibited by the cyclosporin derivative PSC 833, nigericin, reserpine and valinomycin. The effect of reserpine is transiant, while that of the cyclosporin derivative PSC 833, nigericin and valinomycin is proportional to the time of exposure. Cyclohexinmide has inhibitory effect only when applied prior to addition of the fungicide. In terms of biological role, pleiotropic ABC efflux transporter involved in the protection of the cells against a wide range of toxic compounds. Confers resistance to the azole fenarimol via efflux transport. May also be involved in the secretion of penicillin. This is ABC multidrug transporter atrD from Emericella nidulans (Aspergillus nidulans).